The chain runs to 372 residues: N-methyl-L-tryptophan oxidase (372 aa).

4-34 lines the FAD pocket; it reads DLIIIGSGSVGAAAGYYATRAGLKVLMTDAH. The residue at position 307 (C307) is an S-8alpha-FAD cysteine.

This sequence belongs to the MSOX/MTOX family. MTOX subfamily. In terms of assembly, monomer. The cofactor is FAD.

The enzyme catalyses N(alpha)-methyl-L-tryptophan + O2 + H2O = L-tryptophan + formaldehyde + H2O2. In terms of biological role, catalyzes the oxidative demethylation of N-methyl-L-tryptophan. This Salmonella typhi protein is N-methyl-L-tryptophan oxidase.